The chain runs to 120 residues: Large ribosomal subunit protein eL34 (120 aa).

The protein belongs to the eukaryotic ribosomal protein eL34 family.

The protein is Large ribosomal subunit protein eL34 (RPL34) of Pisum sativum (Garden pea).